Reading from the N-terminus, the 147-residue chain is Large ribosomal subunit protein uL15 (147 aa).

Positions Met1–Thr58 are disordered. Residues Ser42–Gly52 are compositionally biased toward gly residues.

The protein belongs to the universal ribosomal protein uL15 family. In terms of assembly, part of the 50S ribosomal subunit.

Its function is as follows. Binds to the 23S rRNA. In Caldanaerobacter subterraneus subsp. tengcongensis (strain DSM 15242 / JCM 11007 / NBRC 100824 / MB4) (Thermoanaerobacter tengcongensis), this protein is Large ribosomal subunit protein uL15.